We begin with the raw amino-acid sequence, 499 residues long: uncharacterized protein (499 aa).

The next 11 helical transmembrane spans lie at 5-25 (FLLV…YNAV), 79-99 (LGLR…TYLL), 110-130 (ALLS…ARYA), 132-152 (PEVP…EYFT), 170-190 (VLTK…FYLL), 203-223 (YAGT…QYLV), 252-272 (ALDI…ALFW), 286-306 (VWFS…PVYI), 332-352 (LSLI…SLYF), 354-374 (FSAT…LKKY), and 377-397 (LPAF…LPYV).

This sequence belongs to the glycosyltransferase 39 family.

The protein resides in the cell membrane. This is an uncharacterized protein from Aquifex aeolicus (strain VF5).